The chain runs to 301 residues: Rhodopsin (301 aa).

Topologically, residues 1-18 (LHMIHLHWYQYPPMNPMM) are extracellular. Residues 19–43 (YPLLLIFMLFTGILCLAGNFVTIWV) form a helical membrane-spanning segment. Residues 44-55 (FMNTKSLRTPAN) lie on the Cytoplasmic side of the membrane. A helical membrane pass occupies residues 56–78 (LLVVNLAMSDFLMMFTMFPPMMV). The Extracellular portion of the chain corresponds to 79–92 (TCYYHTWTLGPTFC). Cys92 and Cys169 are joined by a disulfide. The chain crosses the membrane as a helical span at residues 93-115 (QVYGFLGNLCGCASIWTMVFITF). The short motif at 116–118 (DRY) is the 'Ionic lock' involved in activated form stabilization element. Residues 116 to 134 (DRYNVIVKGVAGEPLSTKK) are Cytoplasmic-facing. A helical membrane pass occupies residues 135–155 (ASLWILIVWVLSLAWCMAPFF). At 156–182 (GWNRYVPEGNLTGCGTDYLSEDILSRS) the chain is on the extracellular side. Asn165 carries an N-linked (GlcNAc...) asparagine glycan. A helical membrane pass occupies residues 183-204 (YLYIYSTWVYFLPLTITIYCYV). The Cytoplasmic segment spans residues 205 to 245 (FIIKAVAAHEKGMRDQAKKMGIKSLRNEEAQKTSAECRLAK). Residues 246–267 (IAMTTVALWFIAWTPYLLINWV) form a helical membrane-spanning segment. The Extracellular segment spans residues 268 to 278 (GMFARSYLSPV). Residues 279–300 (YTIWGYVFAKANAVYNPIVYAI) traverse the membrane as a helical segment. Lys288 carries the post-translational modification N6-(retinylidene)lysine.

Belongs to the G-protein coupled receptor 1 family. Opsin subfamily. Homodimer. Interacts with GNAQ. In terms of processing, contains one covalently linked retinal chromophore.

It is found in the cell projection. The protein resides in the rhabdomere membrane. In terms of biological role, photoreceptor required for image-forming vision at low light intensity. Can use both retinal and 3-dehydroretinal as visual pigment. Light-induced isomerization of 11-cis to all-trans retinal triggers a conformational change that activates signaling via G-proteins. Signaling via GNAQ probably mediates the activation of phospholipase C. The protein is Rhodopsin (RHO) of Procambarus milleri (Miami cave crayfish).